Consider the following 265-residue polypeptide: Flavin-dependent thymidylate synthase (265 aa).

One can recognise a ThyX domain in the interval 11-224 (GFLKLIDFMG…PIAFNSFENH (214 aa)). FAD is bound by residues S56, 79 to 81 (RHR), and E87. Residue 76-79 (QWMR) coordinates dUMP. Positions 79-89 (RHRTARINEVS) match the ThyX motif motif. Residue R155 coordinates dUMP. Residues 171-173 (DLN) and H177 each bind FAD. Residue R182 participates in dUMP binding. R182 serves as the catalytic Involved in ionization of N3 of dUMP, leading to its activation.

This sequence belongs to the thymidylate synthase ThyX family. As to quaternary structure, homotetramer. Requires FAD as cofactor.

It carries out the reaction dUMP + (6R)-5,10-methylene-5,6,7,8-tetrahydrofolate + NADPH + H(+) = dTMP + (6S)-5,6,7,8-tetrahydrofolate + NADP(+). It functions in the pathway pyrimidine metabolism; dTTP biosynthesis. Functionally, catalyzes the reductive methylation of 2'-deoxyuridine-5'-monophosphate (dUMP) to 2'-deoxythymidine-5'-monophosphate (dTMP) while utilizing 5,10-methylenetetrahydrofolate (mTHF) as the methyl donor, and NADPH and FADH(2) as the reductant. This chain is Flavin-dependent thymidylate synthase, found in Borreliella burgdorferi (strain ATCC 35210 / DSM 4680 / CIP 102532 / B31) (Borrelia burgdorferi).